A 437-amino-acid polypeptide reads, in one-letter code: Sodium/bile acid cotransporter 4 (437 aa).

At 1 to 103 the chain is on the extracellular side; that stretch reads MDGLDNTTRL…PPFWDTPLNH (103 aa). Asparagine 6, asparagine 20, and asparagine 26 each carry an N-linked (GlcNAc...) asparagine glycan. Residues 16–84 are disordered; sequence LLPDNLTLSP…GGVAGQDSST (69 aa). The span at 21 to 50 shows a compositional bias: low complexity; it reads LTLSPNASSTSASTLSPLPVTSSPSPGLSL. The helical transmembrane segment at 104–124 threads the bilayer; that stretch reads GLNVFVGAALCITMLGLGCTV. Topologically, residues 125 to 140 are cytoplasmic; that stretch reads DVNHFGAHVRRPVGAL. Residues 141–161 form a helical membrane-spanning segment; it reads LAALCQFGFLPLLAFLLALAF. Residues 162–197 lie on the Extracellular side of the membrane; it reads KLDEVAAVAVLLCGCCPGGNLSNLMSLLVDGDMNLS. N-linked (GlcNAc...) asparagine glycans are attached at residues asparagine 181 and asparagine 195. A helical transmembrane segment spans residues 198 to 218; the sequence is IIMTISSTLLALVLMPLCLWI. The Cytoplasmic segment spans residues 219 to 233; sequence YSRAWINTPLVQLLP. A helical transmembrane segment spans residues 234 to 254; it reads LGAVTLTLCSTLIPIGLGVFI. The Extracellular segment spans residues 255-267; it reads RYKYNRVADYIVK. A helical transmembrane segment spans residues 268–288; that stretch reads VSLCSLLVTLVVLFIMTGTML. Topologically, residues 289–291 are cytoplasmic; the sequence is GPE. The helical transmembrane segment at 292–312 threads the bilayer; it reads LLASIPAAVYVVAIFMPLAGY. Topologically, residues 313–360 are extracellular; that stretch reads ASGYGLATLFHLPPNCKRTVCLETGSQNVQLCTAILKLAFPPRFIGSM. A helical membrane pass occupies residues 361-381; that stretch reads YMFPLLYALFQSAEAGVFVLI. At 382–437 the chain is on the cytoplasmic side; sequence YKMYGSEILHKREALDEDDDTDISYKKLKEEELADTSYGTVGTDDLVLMETTQTSL.

This sequence belongs to the bile acid:sodium symporter (BASS) (TC 2.A.28) family. Post-translationally, activated following N-terminal proteolytic cleavage by thrombin and/or proteases. In terms of tissue distribution, mainly expressed in the central nervous system cholinergic neurons. Expressed (at protein level) in motor regions of the spinal cord and rhombencephalon, in mesopontine cholinergic neurons, the medial habenula, cholinergic areas of the forebrain, and the gut myenteric plexus.

It is found in the cell membrane. Transporter for bile acids. The chain is Sodium/bile acid cotransporter 4 (Slc10a4) from Rattus norvegicus (Rat).